Consider the following 224-residue polypeptide: Putative ankyrin repeat protein R845 (224 aa).

ANK repeat units lie at residues 1 to 14, 15 to 44, 46 to 74, 75 to 104, 105 to 134, 136 to 164, 165 to 194, and 196 to 224; these read MVEYLVSLGADVRS, NYDHAIKSAFENGHLQVIKYLISLGSDVSM, YDYILLRASRNGYIDVVKYLIEQGVDPRT, NNDKAVRKASKNGRLEIVEYLVTLGADIRI, DNDSAVRWASKNGHIKTVEFLVAKGADIRA, NDYSLRHSSKHGHIKMVEYLVAQGADVRA, DNDYAIKWASGKGHLEVVKYLVEKGADFRA, and NDCAVKWASQTGRVEIVEYLVSKGAVCPY.

This Acanthamoeba polyphaga mimivirus (APMV) protein is Putative ankyrin repeat protein R845.